The chain runs to 294 residues: Phosphatidylglycerol--prolipoprotein diacylglyceryl transferase (294 aa).

7 consecutive transmembrane segments (helical) span residues 21 to 41 (VSLH…LWLA), 60 to 80 (LLYV…VLFY), 96 to 116 (WDGG…MIWF), 124 to 144 (FFQV…LGRI), 199 to 219 (SQLY…NIFV), 226 to 246 (GSVS…VEFF), and 259 to 279 (ISMG…FMVW). Position 143 (Arg143) interacts with a 1,2-diacyl-sn-glycero-3-phospho-(1'-sn-glycerol).

This sequence belongs to the Lgt family.

Its subcellular location is the cell inner membrane. It carries out the reaction L-cysteinyl-[prolipoprotein] + a 1,2-diacyl-sn-glycero-3-phospho-(1'-sn-glycerol) = an S-1,2-diacyl-sn-glyceryl-L-cysteinyl-[prolipoprotein] + sn-glycerol 1-phosphate + H(+). It functions in the pathway protein modification; lipoprotein biosynthesis (diacylglyceryl transfer). Its function is as follows. Catalyzes the transfer of the diacylglyceryl group from phosphatidylglycerol to the sulfhydryl group of the N-terminal cysteine of a prolipoprotein, the first step in the formation of mature lipoproteins. This Proteus mirabilis (strain HI4320) protein is Phosphatidylglycerol--prolipoprotein diacylglyceryl transferase.